The primary structure comprises 431 residues: Interleukin-11 receptor subunit alpha (431 aa).

Residues 1 to 23 form the signal peptide; the sequence is MSSSRSGLTRVLVAVATALVSSS. The Extracellular portion of the chain corresponds to 24 to 371; that stretch reads TPCPQAWGPP…DPLEQVAVLA (348 aa). Positions 27–110 constitute an Ig-like C2-type domain; sequence PQAWGPPGVQ…FGGMVTLKLG (84 aa). Intrachain disulfides connect cysteine 48–cysteine 94, cysteine 120–cysteine 130, and cysteine 170–cysteine 180. 2 Fibronectin type-III domains span residues 112–219 and 220–317; these read PPAR…LRPD and PPQG…TPST. Residue asparagine 127 is glycosylated (N-linked (GlcNAc...) asparagine). A disordered region spans residues 151 to 170; sequence KTLPGAESQRESPSTGPWPC. N-linked (GlcNAc...) asparagine glycosylation is present at asparagine 194. Residues 304 to 308 carry the WSXWS motif motif; sequence WSAWS. The interval 310–360 is disordered; sequence EAWGTPSTGPLRDEVPDGSRGHEQKLEAAAQEDSPAPPSPSLQPDPRPLDH. Over residues 320 to 335 the composition is skewed to basic and acidic residues; that stretch reads LRDEVPDGSRGHEQKL. Over residues 344–355 the composition is skewed to pro residues; the sequence is PAPPSPSLQPDP. The helical transmembrane segment at 372–392 threads the bilayer; the sequence is SLGIFSFLGLAVGALALGLWL. At 393-431 the chain is on the cytoplasmic side; the sequence is RLRRSGKDGPQKPGFLAPMIPGDKLPGIPNLQRTPENFS. The segment at 402–431 is disordered; sequence PQKPGFLAPMIPGDKLPGIPNLQRTPENFS.

The protein belongs to the type I cytokine receptor family. Type 3 subfamily. On IL11 binding, forms a multimer complex with IL6ST/gp130. A short soluble form is also released from the membrane by proteolysis. The sIL11RA is formed either by limited proteolysis of membrane-bound receptors, a process referred to as ectodomain shedding, or directly secreted from the cells after alternative mRNA splicing. mIL11RA is cleaved by the proteases ADAM10, ELANE and PRTN3.

It is found in the membrane. The protein localises to the secreted. Functionally, receptor for interleukin-11 (IL11). The receptor systems for IL6, LIF, OSM, CNTF, IL11 and CT1 can utilize IL6ST for initiating signal transmission. The IL11/IL11RA/IL6ST complex may be involved in the control of proliferation and/or differentiation of skeletogenic progenitor or other mesenchymal cells. Essential for the normal development of craniofacial bones and teeth. Restricts suture fusion and tooth number. In terms of biological role, soluble form of IL11 receptor (sIL11RA) that acts as an agonist of IL11 activity. The IL11:sIL11RA complex binds to IL6ST/gp130 on cell surfaces and induces signaling also on cells that do not express membrane-bound IL11RA in a process called IL11 trans-signaling. This chain is Interleukin-11 receptor subunit alpha, found in Rattus norvegicus (Rat).